The chain runs to 240 residues: DNA repair protein RecO (240 aa).

It belongs to the RecO family.

Functionally, involved in DNA repair and RecF pathway recombination. This is DNA repair protein RecO from Wolbachia sp. subsp. Drosophila simulans (strain wRi).